Consider the following 338-residue polypeptide: Patr class I histocompatibility antigen, alpha chain G (338 aa).

Positions 1–24 (MVVMAPRTLFLLLSGALTLTETWA) are cleaved as a signal peptide. Residues 25 to 114 (GSHSMRYFSA…LRGYYNQSEA (90 aa)) form an alpha-1 region. The Extracellular portion of the chain corresponds to 25–308 (GSHSMRYFSA…KQSSLPTIPI (284 aa)). The N-linked (GlcNAc...) asparagine glycan is linked to Asn-110. The alpha-2 stretch occupies residues 115-206 (SSHTLQWMIG…ENGKEMLQRA (92 aa)). 2 disulfide bridges follow: Cys-125–Cys-188 and Cys-227–Cys-283. The segment at 207–298 (DPPKTHVTHH…GLPEPLMLRW (92 aa)) is alpha-3. One can recognise an Ig-like C1-type domain in the interval 209–299 (PKTHVTHHPV…LPEPLMLRWK (91 aa)). Residues 299 to 308 (KQSSLPTIPI) are connecting peptide. A helical transmembrane segment spans residues 309–332 (MGIVAGLVVLAAVVTGAAVAAVLW). The Cytoplasmic portion of the chain corresponds to 333 to 338 (RKKSSD).

The protein belongs to the MHC class I family. Heterodimer of an alpha chain and a beta chain (beta-2-microglobulin). Homodimer; disulfide-linked. Binds to LILRB1 and LILRB2.

It is found in the cell membrane. Involved in the presentation of foreign antigens to the immune system. The chain is Patr class I histocompatibility antigen, alpha chain G (Patr-G) from Pan troglodytes (Chimpanzee).